Here is a 369-residue protein sequence, read N- to C-terminus: Phenylalanine--tRNA ligase alpha subunit (369 aa).

Mg(2+) is bound at residue glutamate 269.

Belongs to the class-II aminoacyl-tRNA synthetase family. Phe-tRNA synthetase alpha subunit type 1 subfamily. As to quaternary structure, tetramer of two alpha and two beta subunits. The cofactor is Mg(2+).

It is found in the cytoplasm. The enzyme catalyses tRNA(Phe) + L-phenylalanine + ATP = L-phenylalanyl-tRNA(Phe) + AMP + diphosphate + H(+). The chain is Phenylalanine--tRNA ligase alpha subunit from Brucella anthropi (strain ATCC 49188 / DSM 6882 / CCUG 24695 / JCM 21032 / LMG 3331 / NBRC 15819 / NCTC 12168 / Alc 37) (Ochrobactrum anthropi).